The chain runs to 505 residues: ATP synthase subunit alpha (505 aa).

Residue 169–176 (GDRQIGKT) participates in ATP binding.

The protein belongs to the ATPase alpha/beta chains family. In terms of assembly, F-type ATPases have 2 components, CF(1) - the catalytic core - and CF(0) - the membrane proton channel. CF(1) has five subunits: alpha(3), beta(3), gamma(1), delta(1), epsilon(1). CF(0) has three main subunits: a(1), b(2) and c(9-12). The alpha and beta chains form an alternating ring which encloses part of the gamma chain. CF(1) is attached to CF(0) by a central stalk formed by the gamma and epsilon chains, while a peripheral stalk is formed by the delta and b chains.

Its subcellular location is the cell inner membrane. The enzyme catalyses ATP + H2O + 4 H(+)(in) = ADP + phosphate + 5 H(+)(out). Produces ATP from ADP in the presence of a proton gradient across the membrane. The alpha chain is a regulatory subunit. This is ATP synthase subunit alpha from Desulfosudis oleivorans (strain DSM 6200 / JCM 39069 / Hxd3) (Desulfococcus oleovorans).